The chain runs to 483 residues: Glutamyl-tRNA(Gln) amidotransferase subunit A (483 aa).

Active-site charge relay system residues include lysine 76 and serine 151. The Acyl-ester intermediate role is filled by serine 175.

It belongs to the amidase family. GatA subfamily. As to quaternary structure, heterotrimer of A, B and C subunits.

The enzyme catalyses L-glutamyl-tRNA(Gln) + L-glutamine + ATP + H2O = L-glutaminyl-tRNA(Gln) + L-glutamate + ADP + phosphate + H(+). Allows the formation of correctly charged Gln-tRNA(Gln) through the transamidation of misacylated Glu-tRNA(Gln) in organisms which lack glutaminyl-tRNA synthetase. The reaction takes place in the presence of glutamine and ATP through an activated gamma-phospho-Glu-tRNA(Gln). This Ectopseudomonas mendocina (strain ymp) (Pseudomonas mendocina) protein is Glutamyl-tRNA(Gln) amidotransferase subunit A.